The primary structure comprises 147 residues: Hemoglobin subunit epsilon (147 aa).

The Globin domain maps to 3–147 (HFTAEEKNAI…VANALAHKYH (145 aa)). S51 is subject to Phosphoserine. Residues H64 and H93 each coordinate heme b.

It belongs to the globin family. Heterotetramer of two alpha chains and two epsilon chains in early embryonic hemoglobin Gower-2; two zeta chains and two epsilon chains in early embryonic hemoglobin Gower-1. In terms of tissue distribution, red blood cells.

In terms of biological role, the epsilon chain is a beta-type chain of early mammalian embryonic hemoglobin. The protein is Hemoglobin subunit epsilon (HBE1) of Sminthopsis crassicaudata (Fat-tailed dunnart).